Consider the following 197-residue polypeptide: Dephospho-CoA kinase (197 aa).

The region spanning 2 to 197 is the DPCK domain; sequence RIGLTGGIAS…YDALAKTAHE (196 aa). 10–15 contributes to the ATP binding site; sequence ASGKSL.

This sequence belongs to the CoaE family.

It is found in the cytoplasm. The catalysed reaction is 3'-dephospho-CoA + ATP = ADP + CoA + H(+). It participates in cofactor biosynthesis; coenzyme A biosynthesis; CoA from (R)-pantothenate: step 5/5. In terms of biological role, catalyzes the phosphorylation of the 3'-hydroxyl group of dephosphocoenzyme A to form coenzyme A. This chain is Dephospho-CoA kinase, found in Shouchella clausii (strain KSM-K16) (Alkalihalobacillus clausii).